A 226-amino-acid polypeptide reads, in one-letter code: Apoptosis regulator OPG045 (226 aa).

It belongs to the orthopoxvirus OPG045 family. Homodimer. Interacts with host pro-apoptotic protein BCL2L11 (via BH3 domain). Interacts with host NLRP1. Interacts with host BAK.

It localises to the host mitochondrion outer membrane. It is found in the host cytoplasm. Its function is as follows. Plays a role in evading host innate immune response by inhibiting host inflammasome activation. Interacts with and inhibits NLR-mediated interleukin-1 beta/IL1B production in infected cells. At the host mitochondria outer membrane, interacts with the BH3 domain of host BAK and prevents BAK from binding active BAX. In turn, host apoptosis is inhibited. The polypeptide is Apoptosis regulator OPG045 (OPG045) (Homo sapiens (Human)).